The following is a 473-amino-acid chain: Cell division protein FtsP (473 aa).

The tat-type signal signal peptide spans 1 to 27 (MSLSRRQFIQASGLAMCLGALPFAVQA).

It belongs to the FtsP family. Predicted to be exported by the Tat system. The position of the signal peptide cleavage has not been experimentally proven.

The protein resides in the periplasm. In terms of biological role, cell division protein that is required for growth during stress conditions. May be involved in protecting or stabilizing the divisomal assembly under conditions of stress. This chain is Cell division protein FtsP, found in Xenorhabdus nematophila (strain ATCC 19061 / DSM 3370 / CCUG 14189 / LMG 1036 / NCIMB 9965 / AN6).